A 420-amino-acid polypeptide reads, in one-letter code: Phosphoglycerate kinase (420 aa).

(2R)-3-phosphoglycerate is bound by residues V26, D27, Y28, N29, Q42, R43, S66, H67, G69, R70, L125, R126, H173, and R174. At Y199 the chain carries Phosphotyrosine. S206 carries the phosphoserine modification. The calmodulin binding stretch occupies residues K209–E228. G217 serves as a coordination point for ADP. CDP is bound at residue G217. 2 residues coordinate AMP: A218 and K219. An ATP-binding site is contributed by A218. Position 218 (A218) interacts with Mg(2+). D222 is a binding site for CDP. D222 provides a ligand contact to Mg(2+). Residue K223 coordinates AMP. ATP is bound at residue K223. G241 contributes to the ADP binding site. Residue G241 coordinates CDP. AMP contacts are provided by G242 and G316. Residues G242 and G316 each coordinate ATP. CDP is bound by residues G341 and F346. An ADP-binding site is contributed by F346. E347 contacts AMP. Positions 347, 378, and 379 each coordinate ATP. D378 contacts Mg(2+). A Phosphoserine modification is found at S393.

This sequence belongs to the phosphoglycerate kinase family. Monomer. Interacts with calmodulin in the presence of Ca(2+). It depends on Mg(2+) as a cofactor.

Its subcellular location is the cytoplasm. The catalysed reaction is (2R)-3-phosphoglycerate + ATP = (2R)-3-phospho-glyceroyl phosphate + ADP. It participates in carbohydrate degradation; glycolysis; pyruvate from D-glyceraldehyde 3-phosphate: step 2/5. The polypeptide is Phosphoglycerate kinase (Dictyostelium discoideum (Social amoeba)).